Consider the following 544-residue polypeptide: Chaperonin GroEL 1 (544 aa).

ATP-binding positions include 29–32, 86–90, G413, 479–481, and D495; these read TLGP, DGTTT, and NAA.

This sequence belongs to the chaperonin (HSP60) family. As to quaternary structure, forms a cylinder of 14 subunits composed of two heptameric rings stacked back-to-back. Interacts with the co-chaperonin GroES.

It localises to the cytoplasm. The enzyme catalyses ATP + H2O + a folded polypeptide = ADP + phosphate + an unfolded polypeptide.. In terms of biological role, together with its co-chaperonin GroES, plays an essential role in assisting protein folding. The GroEL-GroES system forms a nano-cage that allows encapsulation of the non-native substrate proteins and provides a physical environment optimized to promote and accelerate protein folding. The polypeptide is Chaperonin GroEL 1 (Synechococcus sp. (strain CC9902)).